Reading from the N-terminus, the 95-residue chain is Large ribosomal subunit protein eL42 (95 aa).

C11, C14, C71, and C74 together coordinate Zn(2+). Residues 11 to 74 (CPRCNTHTEH…QVLVITCTVC (64 aa)) form a C4-type zinc finger.

It belongs to the eukaryotic ribosomal protein eL42 family. In terms of assembly, part of the 50S ribosomal subunit. Requires Zn(2+) as cofactor.

Binds to the 23S rRNA. This is Large ribosomal subunit protein eL42 from Aeropyrum pernix (strain ATCC 700893 / DSM 11879 / JCM 9820 / NBRC 100138 / K1).